A 341-amino-acid chain; its full sequence is tRNA N6-adenosine threonylcarbamoyltransferase (341 aa).

Fe cation-binding residues include His111 and His115. Substrate-binding positions include 134-138 (LVSGG), Asp167, Gly180, and Asn276. Asp304 is a binding site for Fe cation.

This sequence belongs to the KAE1 / TsaD family. Fe(2+) is required as a cofactor.

It is found in the cytoplasm. It catalyses the reaction L-threonylcarbamoyladenylate + adenosine(37) in tRNA = N(6)-L-threonylcarbamoyladenosine(37) in tRNA + AMP + H(+). Required for the formation of a threonylcarbamoyl group on adenosine at position 37 (t(6)A37) in tRNAs that read codons beginning with adenine. Is involved in the transfer of the threonylcarbamoyl moiety of threonylcarbamoyl-AMP (TC-AMP) to the N6 group of A37, together with TsaE and TsaB. TsaD likely plays a direct catalytic role in this reaction. This chain is tRNA N6-adenosine threonylcarbamoyltransferase, found in Pseudomonas syringae pv. syringae (strain B728a).